Reading from the N-terminus, the 130-residue chain is Glycine cleavage system H protein (130 aa).

The region spanning 22–103 is the Lipoyl-binding domain; that stretch reads KAYIGISDCA…PYGSWIIAVE (82 aa). K63 is subject to N6-lipoyllysine.

This sequence belongs to the GcvH family. As to quaternary structure, the glycine cleavage system is composed of four proteins: P, T, L and H. (R)-lipoate is required as a cofactor.

In terms of biological role, the glycine cleavage system catalyzes the degradation of glycine. The H protein shuttles the methylamine group of glycine from the P protein to the T protein. This chain is Glycine cleavage system H protein, found in Clostridium botulinum (strain Kyoto / Type A2).